A 352-amino-acid polypeptide reads, in one-letter code: Lipoyl synthase (352 aa).

Residues 1–21 (MTSVDTPTPHGGTPAPAPATA) form a disordered region. Positions 71, 76, 82, 97, 101, 104, and 308 each coordinate [4Fe-4S] cluster. Residues 83–297 (WEDREATFLI…SRVAEEIGFA (215 aa)) form the Radical SAM core domain.

It belongs to the radical SAM superfamily. Lipoyl synthase family. Requires [4Fe-4S] cluster as cofactor.

The protein localises to the cytoplasm. The catalysed reaction is [[Fe-S] cluster scaffold protein carrying a second [4Fe-4S](2+) cluster] + N(6)-octanoyl-L-lysyl-[protein] + 2 oxidized [2Fe-2S]-[ferredoxin] + 2 S-adenosyl-L-methionine + 4 H(+) = [[Fe-S] cluster scaffold protein] + N(6)-[(R)-dihydrolipoyl]-L-lysyl-[protein] + 4 Fe(3+) + 2 hydrogen sulfide + 2 5'-deoxyadenosine + 2 L-methionine + 2 reduced [2Fe-2S]-[ferredoxin]. The protein operates within protein modification; protein lipoylation via endogenous pathway; protein N(6)-(lipoyl)lysine from octanoyl-[acyl-carrier-protein]: step 2/2. Catalyzes the radical-mediated insertion of two sulfur atoms into the C-6 and C-8 positions of the octanoyl moiety bound to the lipoyl domains of lipoate-dependent enzymes, thereby converting the octanoylated domains into lipoylated derivatives. This Nocardia farcinica (strain IFM 10152) protein is Lipoyl synthase.